Consider the following 347-residue polypeptide: Holliday junction branch migration complex subunit RuvB (347 aa).

Positions 1 to 183 are large ATPase domain (RuvB-L); it reads MTPPSRIVTP…FGIPIRLNFY (183 aa). Residues L22, R23, G64, K67, T68, T69, 130–132, R173, Y183, and R220 contribute to the ATP site; that span reads EDF. Residue T68 participates in Mg(2+) binding. A small ATPAse domain (RuvB-S) region spans residues 184-254; sequence TVEELEGIVS…IADHALSALE (71 aa). The segment at 257-347 is head domain (RuvB-H); it reads AAGLDAMDRR…QFGLFGGDEE (91 aa). DNA-binding residues include R293, R312, and R317.

Belongs to the RuvB family. In terms of assembly, homohexamer. Forms an RuvA(8)-RuvB(12)-Holliday junction (HJ) complex. HJ DNA is sandwiched between 2 RuvA tetramers; dsDNA enters through RuvA and exits via RuvB. An RuvB hexamer assembles on each DNA strand where it exits the tetramer. Each RuvB hexamer is contacted by two RuvA subunits (via domain III) on 2 adjacent RuvB subunits; this complex drives branch migration. In the full resolvosome a probable DNA-RuvA(4)-RuvB(12)-RuvC(2) complex forms which resolves the HJ.

The protein resides in the cytoplasm. The enzyme catalyses ATP + H2O = ADP + phosphate + H(+). In terms of biological role, the RuvA-RuvB-RuvC complex processes Holliday junction (HJ) DNA during genetic recombination and DNA repair, while the RuvA-RuvB complex plays an important role in the rescue of blocked DNA replication forks via replication fork reversal (RFR). RuvA specifically binds to HJ cruciform DNA, conferring on it an open structure. The RuvB hexamer acts as an ATP-dependent pump, pulling dsDNA into and through the RuvAB complex. RuvB forms 2 homohexamers on either side of HJ DNA bound by 1 or 2 RuvA tetramers; 4 subunits per hexamer contact DNA at a time. Coordinated motions by a converter formed by DNA-disengaged RuvB subunits stimulates ATP hydrolysis and nucleotide exchange. Immobilization of the converter enables RuvB to convert the ATP-contained energy into a lever motion, pulling 2 nucleotides of DNA out of the RuvA tetramer per ATP hydrolyzed, thus driving DNA branch migration. The RuvB motors rotate together with the DNA substrate, which together with the progressing nucleotide cycle form the mechanistic basis for DNA recombination by continuous HJ branch migration. Branch migration allows RuvC to scan DNA until it finds its consensus sequence, where it cleaves and resolves cruciform DNA. This Rhodopseudomonas palustris (strain BisA53) protein is Holliday junction branch migration complex subunit RuvB.